Reading from the N-terminus, the 419-residue chain is Gamma-glutamyl phosphate reductase (419 aa).

Belongs to the gamma-glutamyl phosphate reductase family.

The protein localises to the cytoplasm. The catalysed reaction is L-glutamate 5-semialdehyde + phosphate + NADP(+) = L-glutamyl 5-phosphate + NADPH + H(+). Its pathway is amino-acid biosynthesis; L-proline biosynthesis; L-glutamate 5-semialdehyde from L-glutamate: step 2/2. Its function is as follows. Catalyzes the NADPH-dependent reduction of L-glutamate 5-phosphate into L-glutamate 5-semialdehyde and phosphate. The product spontaneously undergoes cyclization to form 1-pyrroline-5-carboxylate. The sequence is that of Gamma-glutamyl phosphate reductase from Bordetella bronchiseptica (strain ATCC BAA-588 / NCTC 13252 / RB50) (Alcaligenes bronchisepticus).